Here is a 90-residue protein sequence, read N- to C-terminus: Small ribosomal subunit protein uS15c (90 aa).

Positions 1-11 (MVKNSFSSVIS) are enriched in polar residues. Positions 1 to 20 (MVKNSFSSVISQEEKKENGG) are disordered.

It belongs to the universal ribosomal protein uS15 family. Part of the 30S ribosomal subunit.

Its subcellular location is the plastid. The protein localises to the chloroplast. In Cucumis sativus (Cucumber), this protein is Small ribosomal subunit protein uS15c (rps15).